A 253-amino-acid polypeptide reads, in one-letter code: Phosphoadenosine 5'-phosphosulfate reductase (253 aa).

Cys-239 serves as the catalytic Nucleophile; cysteine thiosulfonate intermediate.

It belongs to the PAPS reductase family. CysH subfamily.

It localises to the cytoplasm. It catalyses the reaction [thioredoxin]-disulfide + sulfite + adenosine 3',5'-bisphosphate + 2 H(+) = [thioredoxin]-dithiol + 3'-phosphoadenylyl sulfate. It participates in sulfur metabolism; hydrogen sulfide biosynthesis; sulfite from sulfate: step 3/3. Its function is as follows. Catalyzes the formation of sulfite from phosphoadenosine 5'-phosphosulfate (PAPS) using thioredoxin as an electron donor. The chain is Phosphoadenosine 5'-phosphosulfate reductase from Aliivibrio fischeri (strain MJ11) (Vibrio fischeri).